We begin with the raw amino-acid sequence, 435 residues long: Adenylosuccinate synthetase (435 aa).

Residues 17–23 (GDEGKGK) and 45–47 (GHT) each bind GTP. Asp-18 (proton acceptor) is an active-site residue. Mg(2+) contacts are provided by Asp-18 and Gly-45. Residues 18–21 (DEGK), 43–46 (NAGH), Thr-134, Arg-148, Gln-229, Thr-244, and Arg-308 contribute to the IMP site. The active-site Proton donor is the His-46. 304 to 310 (SVTGRPR) contacts substrate. GTP is bound by residues Arg-310, 336–338 (KLD), and 418–420 (STG).

Belongs to the adenylosuccinate synthetase family. In terms of assembly, homodimer. The cofactor is Mg(2+).

The protein resides in the cytoplasm. The enzyme catalyses IMP + L-aspartate + GTP = N(6)-(1,2-dicarboxyethyl)-AMP + GDP + phosphate + 2 H(+). Its pathway is purine metabolism; AMP biosynthesis via de novo pathway; AMP from IMP: step 1/2. Functionally, plays an important role in the de novo pathway of purine nucleotide biosynthesis. Catalyzes the first committed step in the biosynthesis of AMP from IMP. The polypeptide is Adenylosuccinate synthetase (Bordetella parapertussis (strain 12822 / ATCC BAA-587 / NCTC 13253)).